The sequence spans 241 residues: Major microneme antigen (241 aa).

A signal peptide spans 1–34 (MTLPIHFPRCVLYGMASAVWSILFLHILVGDTMS). Residues 35–103 (AADALSWSGG…ATGRGPSFVH (69 aa)) constitute a propeptide that is removed on maturation. Positions 64-83 (GKELEQQHGGEEQQMQRDTK) are enriched in basic and acidic residues. The segment at 64-90 (GKELEQQHGGEEQQMQRDTKPAAFSNP) is disordered. PAN domains are found at residues 112 to 181 (CFPH…PRSC) and 185 to 241 (CTDN…VERA). 6 disulfides stabilise this stretch: cysteine 112-cysteine 181, cysteine 137-cysteine 159, cysteine 141-cysteine 147, cysteine 185-cysteine 189, cysteine 210-cysteine 230, and cysteine 214-cysteine 220. Serine 121 lines the a carbohydrate pocket. A carbohydrate is bound by residues lysine 162, tyrosine 169, and aspartate 174.

Belongs to the microneme antigen family. In terms of assembly, homodimer or heterodimer of major microneme antigen and microneme antigen. In terms of processing, contains six disulfide bonds.

It localises to the cytoplasmic vesicle. The protein localises to the secretory vesicle. The protein resides in the microneme. Its function is as follows. Galactose-binding lectin. Plays a role in adhesion to the host cell. Has a potential role in invasion of host cells. The polypeptide is Major microneme antigen (Sarcocystis muris).